The chain runs to 322 residues: tRNA (guanine-N(7)-)-methyltransferase (322 aa).

S-adenosyl-L-methionine-binding residues include Glu29, Glu55, and Asp105. Asp105 is an active-site residue. Residues Lys109 and Asp141 each coordinate substrate.

The protein belongs to the class I-like SAM-binding methyltransferase superfamily. TrmB family.

The enzyme catalyses guanosine(46) in tRNA + S-adenosyl-L-methionine = N(7)-methylguanosine(46) in tRNA + S-adenosyl-L-homocysteine. Its pathway is tRNA modification; N(7)-methylguanine-tRNA biosynthesis. Its function is as follows. Catalyzes the formation of N(7)-methylguanine at position 46 (m7G46) in tRNA. The chain is tRNA (guanine-N(7)-)-methyltransferase from Deinococcus radiodurans (strain ATCC 13939 / DSM 20539 / JCM 16871 / CCUG 27074 / LMG 4051 / NBRC 15346 / NCIMB 9279 / VKM B-1422 / R1).